Reading from the N-terminus, the 363-residue chain is UDP-3-O-acylglucosamine N-acyltransferase (363 aa).

His259 serves as the catalytic Proton acceptor.

The protein belongs to the transferase hexapeptide repeat family. LpxD subfamily. Homotrimer.

It carries out the reaction a UDP-3-O-[(3R)-3-hydroxyacyl]-alpha-D-glucosamine + a (3R)-hydroxyacyl-[ACP] = a UDP-2-N,3-O-bis[(3R)-3-hydroxyacyl]-alpha-D-glucosamine + holo-[ACP] + H(+). The protein operates within bacterial outer membrane biogenesis; LPS lipid A biosynthesis. Functionally, catalyzes the N-acylation of UDP-3-O-acylglucosamine using 3-hydroxyacyl-ACP as the acyl donor. Is involved in the biosynthesis of lipid A, a phosphorylated glycolipid that anchors the lipopolysaccharide to the outer membrane of the cell. The protein is UDP-3-O-acylglucosamine N-acyltransferase of Ruegeria pomeroyi (strain ATCC 700808 / DSM 15171 / DSS-3) (Silicibacter pomeroyi).